The primary structure comprises 104 residues: MKIHKGDMVLVISGPDKGAKGKVIQAFPKTEKVLVEGVNRIKKHVANSAPERGAESGGIVTQEAPIHVSNVMVLDSDGNPTRVGYRFDENGKKVRISRRNGKDI.

Belongs to the universal ribosomal protein uL24 family. Part of the 50S ribosomal subunit.

Functionally, one of two assembly initiator proteins, it binds directly to the 5'-end of the 23S rRNA, where it nucleates assembly of the 50S subunit. Its function is as follows. One of the proteins that surrounds the polypeptide exit tunnel on the outside of the subunit. The sequence is that of Large ribosomal subunit protein uL24 from Corynebacterium diphtheriae (strain ATCC 700971 / NCTC 13129 / Biotype gravis).